The chain runs to 318 residues: Coproporphyrin III ferrochelatase (318 aa).

Residues H186 and E268 each contribute to the Fe(2+) site.

It belongs to the ferrochelatase family.

It localises to the cytoplasm. It catalyses the reaction Fe-coproporphyrin III + 2 H(+) = coproporphyrin III + Fe(2+). It participates in porphyrin-containing compound metabolism; protoheme biosynthesis. Involved in coproporphyrin-dependent heme b biosynthesis. Catalyzes the insertion of ferrous iron into coproporphyrin III to form Fe-coproporphyrin III. The protein is Coproporphyrin III ferrochelatase of Lactococcus lactis subsp. cremoris (strain SK11).